We begin with the raw amino-acid sequence, 349 residues long: Histone-lysine N-methyltransferase ATXR6 (349 aa).

The segment at methionine 1–aspartate 28 is disordered. The segment at aspartate 32–histidine 82 adopts a PHD-type zinc-finger fold. The PIP motif signature appears at glutamine 92–phenylalanine 99. The interval proline 105–leucine 126 is disordered. The span at aspartate 106–serine 116 shows a compositional bias: low complexity. Methionine 190 lines the substrate pocket. The SET domain occupies proline 214–asparagine 337. S-adenosyl-L-methionine contacts are provided by residues glutamate 224–phenylalanine 226 and arginine 287–glycine 291. Substrate is bound by residues arginine 309 and tyrosine 339 to glutamate 340. 2 residues coordinate S-adenosyl-L-methionine: tyrosine 343 and valine 349.

This sequence belongs to the class V-like SAM-binding methyltransferase superfamily. Histone-lysine methyltransferase family. TRX/MLL subfamily. As to quaternary structure, interacts with PCNA1 and PCNA2. Interacts (via PHD domain) with HTR1 (via N-terminus). Interacts with IPS1. Expressed in leaves, roots, stems, flowers and siliques. Up-regulated in tissues where cell division is active.

It is found in the nucleus. It carries out the reaction L-lysyl(27)-[histone H3] + S-adenosyl-L-methionine = N(6)-methyl-L-lysyl(27)-[histone H3] + S-adenosyl-L-homocysteine + H(+). Its function is as follows. Histone methyltransferase that specifically monomethylates 'Lys-27' of histone H3 (H3K27me1). Has higher activity on nucleosomes containing H3.1 than H3.3. Involved in the formation of constitutive heterochromatin and the silencing of heterochromatic elements. May act as a positive regulator of the G1-S transition. Influences which sets of rRNA gene variants are expressed or silenced. Up-regulated by E2FB. In Arabidopsis thaliana (Mouse-ear cress), this protein is Histone-lysine N-methyltransferase ATXR6 (ATXR6).